Reading from the N-terminus, the 101-residue chain is Small ribosomal subunit protein uS14 (101 aa).

Belongs to the universal ribosomal protein uS14 family. Part of the 30S ribosomal subunit. Contacts proteins S3 and S10.

Binds 16S rRNA, required for the assembly of 30S particles and may also be responsible for determining the conformation of the 16S rRNA at the A site. This is Small ribosomal subunit protein uS14 from Rhizorhabdus wittichii (strain DSM 6014 / CCUG 31198 / JCM 15750 / NBRC 105917 / EY 4224 / RW1) (Sphingomonas wittichii).